The sequence spans 622 residues: Chaperone protein HscA homolog (622 aa).

It belongs to the heat shock protein 70 family.

In terms of biological role, chaperone involved in the maturation of iron-sulfur cluster-containing proteins. Has a low intrinsic ATPase activity which is markedly stimulated by HscB. This Burkholderia pseudomallei (strain K96243) protein is Chaperone protein HscA homolog.